The sequence spans 89 residues: UPF0367 protein PCC8801_1959 (89 aa).

It belongs to the UPF0367 family.

This chain is UPF0367 protein PCC8801_1959, found in Rippkaea orientalis (strain PCC 8801 / RF-1) (Cyanothece sp. (strain PCC 8801)).